The following is a 105-amino-acid chain: uncharacterized protein (105 aa).

A signal peptide spans 1–24 (MYWPCLVITPFTVGESFCLLLSLG).

This is an uncharacterized protein from Saccharomyces cerevisiae (strain ATCC 204508 / S288c) (Baker's yeast).